The primary structure comprises 205 residues: ATP synthase subunit b (205 aa).

Residues 51-69 traverse the membrane as a helical segment; that stretch reads FAWRCLDFAVLLAIVVWAL.

Belongs to the ATPase B chain family. As to quaternary structure, F-type ATPases have 2 components, F(1) - the catalytic core - and F(0) - the membrane proton channel. F(1) has five subunits: alpha(3), beta(3), gamma(1), delta(1), epsilon(1). F(0) has three main subunits: a(1), b(2) and c(10-14). The alpha and beta chains form an alternating ring which encloses part of the gamma chain. F(1) is attached to F(0) by a central stalk formed by the gamma and epsilon chains, while a peripheral stalk is formed by the delta and b chains.

It localises to the cell inner membrane. Functionally, f(1)F(0) ATP synthase produces ATP from ADP in the presence of a proton or sodium gradient. F-type ATPases consist of two structural domains, F(1) containing the extramembraneous catalytic core and F(0) containing the membrane proton channel, linked together by a central stalk and a peripheral stalk. During catalysis, ATP synthesis in the catalytic domain of F(1) is coupled via a rotary mechanism of the central stalk subunits to proton translocation. Component of the F(0) channel, it forms part of the peripheral stalk, linking F(1) to F(0). The sequence is that of ATP synthase subunit b from Geotalea uraniireducens (strain Rf4) (Geobacter uraniireducens).